The chain runs to 277 residues: Ribosomal RNA small subunit methyltransferase A (277 aa).

S-adenosyl-L-methionine is bound by residues Asn-18, Leu-20, Gly-45, Glu-66, Asp-89, and Asn-110.

It belongs to the class I-like SAM-binding methyltransferase superfamily. rRNA adenine N(6)-methyltransferase family. RsmA subfamily.

It is found in the cytoplasm. The catalysed reaction is adenosine(1518)/adenosine(1519) in 16S rRNA + 4 S-adenosyl-L-methionine = N(6)-dimethyladenosine(1518)/N(6)-dimethyladenosine(1519) in 16S rRNA + 4 S-adenosyl-L-homocysteine + 4 H(+). Its function is as follows. Specifically dimethylates two adjacent adenosines (A1518 and A1519) in the loop of a conserved hairpin near the 3'-end of 16S rRNA in the 30S particle. May play a critical role in biogenesis of 30S subunits. The protein is Ribosomal RNA small subunit methyltransferase A of Cupriavidus taiwanensis (strain DSM 17343 / BCRC 17206 / CCUG 44338 / CIP 107171 / LMG 19424 / R1) (Ralstonia taiwanensis (strain LMG 19424)).